A 428-amino-acid polypeptide reads, in one-letter code: uncharacterized protein (428 aa).

One can recognise a Glutaredoxin domain in the interval 241–351; sequence KEEEEQSVGK…KLLGGCERVE (111 aa). Over residues 386–401 the composition is skewed to acidic residues; sequence EDDDDDDDEGDDDESV. The tract at residues 386–405 is disordered; that stretch reads EDDDDDDDEGDDDESVKEER.

This is an uncharacterized protein from Arabidopsis thaliana (Mouse-ear cress).